Reading from the N-terminus, the 505-residue chain is Lysine--tRNA ligase (505 aa).

2 residues coordinate Mg(2+): glutamate 415 and glutamate 422.

It belongs to the class-II aminoacyl-tRNA synthetase family. Homodimer. The cofactor is Mg(2+).

The protein resides in the cytoplasm. The catalysed reaction is tRNA(Lys) + L-lysine + ATP = L-lysyl-tRNA(Lys) + AMP + diphosphate. The protein is Lysine--tRNA ligase of Pectobacterium carotovorum subsp. carotovorum (strain PC1).